Reading from the N-terminus, the 345-residue chain is Phosphoribosylformylglycinamidine cyclo-ligase (345 aa).

This sequence belongs to the AIR synthase family.

The protein resides in the cytoplasm. The catalysed reaction is 2-formamido-N(1)-(5-O-phospho-beta-D-ribosyl)acetamidine + ATP = 5-amino-1-(5-phospho-beta-D-ribosyl)imidazole + ADP + phosphate + H(+). It functions in the pathway purine metabolism; IMP biosynthesis via de novo pathway; 5-amino-1-(5-phospho-D-ribosyl)imidazole from N(2)-formyl-N(1)-(5-phospho-D-ribosyl)glycinamide: step 2/2. The chain is Phosphoribosylformylglycinamidine cyclo-ligase from Myxococcus xanthus (strain DK1622).